Reading from the N-terminus, the 77-residue chain is Putative defensin-like protein 185 (77 aa).

The signal sequence occupies residues 1–22 (MKNSSILLLLVVFFVISSSGEA). Cystine bridges form between C25/C77, C31/C54, C40/C71, and C44/C73.

The protein belongs to the DEFL family.

The protein resides in the secreted. The chain is Putative defensin-like protein 185 (LCR39) from Arabidopsis thaliana (Mouse-ear cress).